Reading from the N-terminus, the 2727-residue chain is E3 ubiquitin-protein ligase Ufd4 (2727 aa).

2 disordered regions span residues 247–271 (THSS…TNSD) and 365–389 (RGSN…TDRT). Polar residues predominate over residues 365–374 (RGSNNPNQGQ). 3 ANK repeats span residues 422–451 (VGQT…DVNK), 453–482 (QRSS…YPDL), and 486–518 (DGKT…WMSP). Positions 682 to 702 (AQRSSTSVVVAPRPTSDDPME) are disordered. Residues 1322–1392 (QIRAQLKHMT…KYDLKLADCE (71 aa)) enclose the MIB/HERC2 domain. 2 stretches are compositionally biased toward polar residues: residues 1401–1430 (QSMG…STPS) and 1437–1448 (KNQNPEGASNQT). 6 disordered regions span residues 1401 to 1448 (QSMG…SNQT), 1483 to 1512 (NTSS…GPSP), 1570 to 1592 (ESVT…REND), 1845 to 1871 (YPSL…QQSA), 1905 to 1930 (ALLG…DEYE), and 2092 to 2115 (STCL…ASTL). A compositionally biased stretch (low complexity) spans 1575–1592 (SQSSSHPDVQSSSPREND). Residues 1909–1930 (DLDDEDDMDEDNDEEENEDEYE) show a composition bias toward acidic residues. Residues 2104–2115 (PDVSSKSGASTL) show a composition bias toward polar residues. The 439-residue stretch at 2289 to 2727 (RKSVLEVEFL…ATKEKGFHLN (439 aa)) folds into the HECT domain. The active-site Glycyl thioester intermediate is Cys-2696.

The protein belongs to the UPL family. K-HECT subfamily.

The catalysed reaction is S-ubiquitinyl-[E2 ubiquitin-conjugating enzyme]-L-cysteine + [acceptor protein]-L-lysine = [E2 ubiquitin-conjugating enzyme]-L-cysteine + N(6)-ubiquitinyl-[acceptor protein]-L-lysine.. Its pathway is protein modification; protein ubiquitination. In terms of biological role, E3 ubiquitin-protein ligase which accepts ubiquitin from an E2 ubiquitin-conjugating enzyme in the form of a thioester and then directly transfers the ubiquitin to targeted substrates. Involved in the negative regulation of the Ras/MAPK signaling pathway in the wing by acting with the E2 enzyme Unc6 and the putative E3 ligases poe and Kcmf1 to mediate the ubiquitination and proteasomal degradation of rl/MAPK. This chain is E3 ubiquitin-protein ligase Ufd4, found in Drosophila melanogaster (Fruit fly).